The chain runs to 123 residues: Protein Rev (123 aa).

Residue Ser5 is modified to Phosphoserine; by host CK2. The homomultimerization stretch occupies residues 18 to 26; the sequence is IIKLLYQSS. Residues 25 to 50 form a disordered region; the sequence is SSPCPNPRGSRQARKNRRRRWRARQR. The Nuclear localization signal and RNA-binding (RRE) motif lies at 34–50; that stretch reads SRQARKNRRRRWRARQR. The segment covering 35-49 has biased composition (basic residues); that stretch reads RQARKNRRRRWRARQ. A Nuclear export signal and binding to XPO1 motif is present at residues 73–84; it reads LQLPPIERLRLD. Residues 86-123 form a disordered region; that stretch reads SESCGTSGTQQPQGTETGVGGPQISVESSAVLGSGTKN. Residues 88–101 show a composition bias toward polar residues; the sequence is SCGTSGTQQPQGTE. Ser92 bears the Phosphoserine; by host mark.

This sequence belongs to the HIV-1 REV protein family. Homomultimer; when bound to the RRE. Multimeric assembly is essential for activity and may involve XPO1. Binds to human KPNB1, XPO1, TNPO1, RANBP5 and IPO7. Interacts with the viral Integrase. Interacts with human KHDRBS1. Interacts with human NAP1; this interaction decreases Rev multimerization and stimulates its activity. Interacts with human DEAD-box helicases DDX3 and DDX24; these interactions may serve for viral RNA export to the cytoplasm and packaging, respectively. Interacts with human PSIP1; this interaction may inhibit HIV-1 DNA integration by promoting dissociation of the Integrase-LEDGF/p75 complex. Post-translationally, asymmetrically arginine dimethylated at one site by host PRMT6. Methylation impairs the RNA-binding activity and export of viral RNA from the nucleus to the cytoplasm. Phosphorylated by protein kinase CK2. Presence of, and maybe binding to the N-terminus of the regulatory beta subunit of CK2 is necessary for CK2-mediated Rev's phosphorylation.

The protein resides in the host nucleus. Its subcellular location is the host nucleolus. It localises to the host cytoplasm. Its function is as follows. Escorts unspliced or incompletely spliced viral pre-mRNAs (late transcripts) out of the nucleus of infected cells. These pre-mRNAs carry a recognition sequence called Rev responsive element (RRE) located in the env gene, that is not present in fully spliced viral mRNAs (early transcripts). This function is essential since most viral proteins are translated from unspliced or partially spliced pre-mRNAs which cannot exit the nucleus by the pathway used by fully processed cellular mRNAs. Rev itself is translated from a fully spliced mRNA that readily exits the nucleus. Rev's nuclear localization signal (NLS) binds directly to KPNB1/Importin beta-1 without previous binding to KPNA1/Importin alpha-1. KPNB1 binds to the GDP bound form of RAN (Ran-GDP) and targets Rev to the nucleus. In the nucleus, the conversion from Ran-GDP to Ran-GTP dissociates Rev from KPNB1 and allows Rev's binding to the RRE in viral pre-mRNAs. Rev multimerization on the RRE via cooperative assembly exposes its nuclear export signal (NES) to the surface. Rev can then form a complex with XPO1/CRM1 and Ran-GTP, leading to nuclear export of the complex. Conversion from Ran-GTP to Ran-GDP mediates dissociation of the Rev/RRE/XPO1/RAN complex, so that Rev can return to the nucleus for a subsequent round of export. Beside KPNB1, also seems to interact with TNPO1/Transportin-1, RANBP5/IPO5 and IPO7/RANBP7 for nuclear import. The nucleoporin-like HRB/RIP is an essential cofactor that probably indirectly interacts with Rev to release HIV RNAs from the perinuclear region to the cytoplasm. The sequence is that of Protein Rev from Human immunodeficiency virus type 1 group M subtype A (isolate U455) (HIV-1).